Reading from the N-terminus, the 396-residue chain is Argininosuccinate synthase (396 aa).

9 to 17 (AYSGGLDTS) contacts ATP. Tyrosine 85 provides a ligand contact to L-citrulline. Glycine 115 lines the ATP pocket. 3 residues coordinate L-aspartate: threonine 117, asparagine 121, and aspartate 122. L-citrulline is bound at residue asparagine 121. L-citrulline is bound by residues arginine 125, serine 173, glutamate 258, and tyrosine 270.

It belongs to the argininosuccinate synthase family. Type 1 subfamily. As to quaternary structure, homotetramer.

It is found in the cytoplasm. The enzyme catalyses L-citrulline + L-aspartate + ATP = 2-(N(omega)-L-arginino)succinate + AMP + diphosphate + H(+). Its pathway is amino-acid biosynthesis; L-arginine biosynthesis; L-arginine from L-ornithine and carbamoyl phosphate: step 2/3. In Streptococcus mutans serotype c (strain ATCC 700610 / UA159), this protein is Argininosuccinate synthase.